Reading from the N-terminus, the 57-residue chain is Large ribosomal subunit protein bL32 (57 aa).

Belongs to the bacterial ribosomal protein bL32 family.

In Lysinibacillus sphaericus (strain C3-41), this protein is Large ribosomal subunit protein bL32.